The following is a 68-amino-acid chain: ATP synthase F(0) complex subunit 8 (68 aa).

The helical transmembrane segment at 8 to 21 (VWPTMITPMLLTLF) threads the bilayer. The residue at position 54 (lysine 54) is an N6-acetyllysine; alternate. Lysine 54 carries the N6-succinyllysine; alternate modification. N6-acetyllysine is present on lysine 57.

The protein belongs to the ATPase protein 8 family. In terms of assembly, component of the ATP synthase complex composed at least of ATP5F1A/subunit alpha, ATP5F1B/subunit beta, ATP5MC1/subunit c (homooctomer), MT-ATP6/subunit a, MT-ATP8/subunit 8, ATP5ME/subunit e, ATP5MF/subunit f, ATP5MG/subunit g, ATP5MK/subunit k, ATP5MJ/subunit j, ATP5F1C/subunit gamma, ATP5F1D/subunit delta, ATP5F1E/subunit epsilon, ATP5PF/subunit F6, ATP5PB/subunit b, ATP5PD/subunit d, ATP5PO/subunit OSCP. ATP synthase complex consists of a soluble F(1) head domain (subunits alpha(3) and beta(3)) - the catalytic core - and a membrane F(0) domain - the membrane proton channel (subunits c, a, 8, e, f, g, k and j). These two domains are linked by a central stalk (subunits gamma, delta, and epsilon) rotating inside the F1 region and a stationary peripheral stalk (subunits F6, b, d, and OSCP). Interacts with PRICKLE3.

It is found in the mitochondrion membrane. In terms of biological role, subunit 8, of the mitochondrial membrane ATP synthase complex (F(1)F(0) ATP synthase or Complex V) that produces ATP from ADP in the presence of a proton gradient across the membrane which is generated by electron transport complexes of the respiratory chain. ATP synthase complex consist of a soluble F(1) head domain - the catalytic core - and a membrane F(1) domain - the membrane proton channel. These two domains are linked by a central stalk rotating inside the F(1) region and a stationary peripheral stalk. During catalysis, ATP synthesis in the catalytic domain of F(1) is coupled via a rotary mechanism of the central stalk subunits to proton translocation. In vivo, can only synthesize ATP although its ATP hydrolase activity can be activated artificially in vitro. Part of the complex F(0) domain. In Homo sapiens (Human), this protein is ATP synthase F(0) complex subunit 8.